The following is a 487-amino-acid chain: MKVFVLGWLLKINLMKTLYSQRRFYHVETPFNTNVGVGGRDIESTGFAWWSGNARLINVSGKLLGAHVAHAGIMVFWTGAMTLFEVAHFVPEKPLYEQGLILIPHLATLGWGVGPGGEIFNTYPYFVVGVVHLISSAVLGFGGLYHSLIGPDTLEESFPFFGYDWRDKNKMTTILGIHLVLLGIGAFLLVIKSLFVGGVYDTWAPGGGDVRFVSNPTLNPLVIFGYVLKSPFGGDGWIVSVNNMEDLIGGHVWIGIICIAGGIWHILTKPFAWARRAFVWSGEAYLSYSLGALSIMGLTASNFVWYNNTAYPSEFYGPTGPEASQAQAFTFLVRDQRLGANVASSQGPTGLGKYLMRSPSGEIIFGGETMRFWDLRAPWVEPLRGPNGLDLNKIKNDIQPWQERRAAEYMTHAPLGSLNSVGGVATEINSVNYVSPRSWLTTSHFFLGFFLFIGHLWHAGRARAAAAGFEKGINRENEPVLSMRPLD.

Positions 1–28 (MKVFVLGWLLKINLMKTLYSQRRFYHVE) are excised as a propeptide. The next 5 membrane-spanning stretches (helical) occupy residues 83–107 (LFEVAHFVPEKPLYEQGLILIPHLA), 148–169 (LIGPDTLEESFPFFGYDWRDKN), 192–214 (KSLFVGGVYDTWAPGGGDVRFVS), 269–289 (KPFAWARRAFVWSGEAYLSYS), and 305–326 (WYNNTAYPSEFYGPTGPEASQA). Position 381 (Glu-381) interacts with [CaMn4O5] cluster. The helical transmembrane segment at 461–485 (RARAAAAGFEKGINRENEPVLSMRP) threads the bilayer.

Belongs to the PsbB/PsbC family. PsbC subfamily. As to quaternary structure, PSII is composed of 1 copy each of membrane proteins PsbA, PsbB, PsbC, PsbD, PsbE, PsbF, PsbH, PsbI, PsbJ, PsbK, PsbL, PsbM, PsbT, PsbX, PsbY, PsbZ, Psb30/Ycf12, at least 3 peripheral proteins of the oxygen-evolving complex and a large number of cofactors. It forms dimeric complexes. It depends on Binds multiple chlorophylls and provides some of the ligands for the Ca-4Mn-5O cluster of the oxygen-evolving complex. It may also provide a ligand for a Cl- that is required for oxygen evolution. PSII binds additional chlorophylls, carotenoids and specific lipids. as a cofactor.

The protein localises to the plastid. It localises to the chloroplast thylakoid membrane. Functionally, one of the components of the core complex of photosystem II (PSII). It binds chlorophyll and helps catalyze the primary light-induced photochemical processes of PSII. PSII is a light-driven water:plastoquinone oxidoreductase, using light energy to abstract electrons from H(2)O, generating O(2) and a proton gradient subsequently used for ATP formation. This chain is Photosystem II CP43 reaction center protein, found in Porphyra purpurea (Red seaweed).